Consider the following 238-residue polypeptide: C-type lectin domain family 4 member A (238 aa).

Over methionine 1 to threonine 48 the chain is Cytoplasmic. The ITIM motif motif lies at isoleucine 5 to valine 10. Residues serine 49–phenylalanine 69 traverse the membrane as a helical; Signal-anchor for type II membrane protein segment. Residues glutamine 70–leucine 238 lie on the Extracellular side of the membrane. Asparagine 91 is a glycosylation site (N-linked (GlcNAc...) asparagine). The cysteines at positions 107 and 118 are disulfide-linked. Residues serine 126–methionine 233 form the C-type lectin domain. Residues asparagine 131 and asparagine 136 are each glycosylated (N-linked (GlcNAc...) asparagine). 2 disulfides stabilise this stretch: cysteine 137-cysteine 231 and cysteine 205-cysteine 223. Residues valine 146, glutamate 152, glutamate 197, serine 199, and glutamate 203 each contribute to the Ca(2+) site. Residues glutamate 197–serine 199 and glutamate 203 contribute to the alpha-D-mannopyranose site. Isoleucine 209 to arginine 211 serves as a coordination point for N-acetyl-D-glucosamine. Residues asparagine 219 and aspartate 220 each coordinate Ca(2+).

May interact with PTPN6 via its ITIM site. As to expression, expressed in splenic antigen-presenting cells including B-cells, monocytes/macrophages, and dendritic cells (at protein level). Expressed in spleen and lymph node and slightly increased with dendritic cell maturation.

Its subcellular location is the cell membrane. Its function is as follows. May be involved in regulating immune reactivity. May play a role in modulating dendritic cells (DC) differentiation and/or maturation. May be involved in the inhibition of B-cell-receptor-mediated calcium mobilization and protein tyrosine phosphorylation. Functionally, C-type lectin receptor that binds carbohydrates mannose and fucose but also weakly interacts with N-acetylglucosamine (GlcNAc) in a Ca(2+)-dependent manner. Involved in regulating immune reactivity. Once triggered by antigen, it is internalized by clathrin-dependent endocytosis and delivers its antigenic cargo into the antigen presentation pathway resulting in cross-priming of CD8(+) T cells. This cross-presentation and cross-priming are enhanced by TLR7 and TLR8 agonists with increased expansion of the CD8(+) T cells, high production of IFNG and TNF with reduced levels of IL4, IL5 and IL13. In plasmacytoid dendritic cells, inhibits TLR9-mediated IFNA and TNF production. May be involved via its ITIM motif (immunoreceptor tyrosine-based inhibitory motifs) in the inhibition of B-cell-receptor-mediated calcium mobilization and protein tyrosine phosphorylation. The chain is C-type lectin domain family 4 member A (Clec4a) from Mus musculus (Mouse).